The following is a 389-amino-acid chain: Chalcone synthase H2 (389 aa).

Cys-164 is an active-site residue.

Belongs to the thiolase-like superfamily. Chalcone/stilbene synthases family.

It is found in the cytoplasm. The enzyme catalyses (E)-4-coumaroyl-CoA + 3 malonyl-CoA + 3 H(+) = 2',4,4',6'-tetrahydroxychalcone + 3 CO2 + 4 CoA. It participates in secondary metabolite biosynthesis; flavonoid biosynthesis. Its function is as follows. Involved in the biosynthesis of prenylated phenolics natural products which contribute to the bitter taste of beer and display broad biological activities. Chalcone synthase that can use 4-coumaroyl-CoA to produce 4,2',4',6'-tetrahydroxychalcone (also termed naringenin-chalcone or chalcone) which can, under specific conditions, spontaneously isomerize into naringenin. This is Chalcone synthase H2 from Humulus lupulus (European hop).